A 160-amino-acid polypeptide reads, in one-letter code: Cytochrome b6-f complex subunit 4 (160 aa).

3 helical membrane passes run Leu36 to Val56, Leu95 to Glu115, and Thr131 to Ile151.

It belongs to the cytochrome b family. PetD subfamily. As to quaternary structure, the 4 large subunits of the cytochrome b6-f complex are cytochrome b6, subunit IV (17 kDa polypeptide, petD), cytochrome f and the Rieske protein, while the 4 small subunits are petG, petL, petM and petN. The complex functions as a dimer.

It localises to the plastid. Its subcellular location is the chloroplast thylakoid membrane. Its function is as follows. Component of the cytochrome b6-f complex, which mediates electron transfer between photosystem II (PSII) and photosystem I (PSI), cyclic electron flow around PSI, and state transitions. This is Cytochrome b6-f complex subunit 4 from Nephroselmis olivacea (Green alga).